We begin with the raw amino-acid sequence, 351 residues long: Protein Wnt-8b (351 aa).

The signal sequence occupies residues 1 to 22 (MFLSKPSVYICLFTCVLQLSHS). A disulfide bridge connects residues Cys-54 and Cys-65. Asn-103 is a glycosylation site (N-linked (GlcNAc...) asparagine). 10 disulfides stabilise this stretch: Cys-104–Cys-112, Cys-114–Cys-132, Cys-180–Cys-194, Cys-182–Cys-189, Cys-256–Cys-294, Cys-272–Cys-287, Cys-291–Cys-333, Cys-309–Cys-324, Cys-311–Cys-321, and Cys-316–Cys-317. Ser-186 is lipidated: O-palmitoleoyl serine. N-linked (GlcNAc...) asparagine glycosylation occurs at Asn-259.

This sequence belongs to the Wnt family. Palmitoleoylation is required for efficient binding to frizzled receptors. Depalmitoleoylation leads to Wnt signaling pathway inhibition. In terms of processing, proteolytic processing by TIKI1 and TIKI2 promotes oxidation and formation of large disulfide-bond oligomers, leading to inactivation of WNT8B. Expression is restricted to the brain, and more specifically to the forebrain.

It localises to the secreted. The protein localises to the extracellular space. Its subcellular location is the extracellular matrix. Functionally, ligand for members of the frizzled family of seven transmembrane receptors. May play an important role in the development and differentiation of certain forebrain structures, notably the hippocampus. The sequence is that of Protein Wnt-8b (WNT8B) from Homo sapiens (Human).